Here is a 400-residue protein sequence, read N- to C-terminus: Imidazolonepropionase (400 aa).

Fe(3+) contacts are provided by His68 and His70. 2 residues coordinate Zn(2+): His68 and His70. 4-imidazolone-5-propanoate contacts are provided by Arg77, Tyr140, and His173. Tyr140 provides a ligand contact to N-formimidoyl-L-glutamate. His238 provides a ligand contact to Fe(3+). Position 238 (His238) interacts with Zn(2+). 4-imidazolone-5-propanoate is bound at residue Gln241. Asp313 contacts Fe(3+). Position 313 (Asp313) interacts with Zn(2+). Residues Asn315 and Gly317 each contribute to the N-formimidoyl-L-glutamate site. Thr318 is a binding site for 4-imidazolone-5-propanoate.

It belongs to the metallo-dependent hydrolases superfamily. HutI family. It depends on Zn(2+) as a cofactor. Requires Fe(3+) as cofactor.

The protein localises to the cytoplasm. The enzyme catalyses 4-imidazolone-5-propanoate + H2O = N-formimidoyl-L-glutamate. It participates in amino-acid degradation; L-histidine degradation into L-glutamate; N-formimidoyl-L-glutamate from L-histidine: step 3/3. In terms of biological role, catalyzes the hydrolytic cleavage of the carbon-nitrogen bond in imidazolone-5-propanoate to yield N-formimidoyl-L-glutamate. It is the third step in the universal histidine degradation pathway. This chain is Imidazolonepropionase, found in Paracoccus denitrificans (strain Pd 1222).